A 396-amino-acid polypeptide reads, in one-letter code: Elongation factor Tu (396 aa).

The region spanning 11 to 205 is the tr-type G domain; it reads KPHVNIGTIG…VIDDYIPTPK (195 aa). Positions 20–27 are G1; that stretch reads GHVDHGKT. 20 to 27 contributes to the GTP binding site; it reads GHVDHGKT. A Mg(2+)-binding site is contributed by T27. Residues 61-65 form a G2 region; the sequence is GITIN. Residues 82-85 are G3; it reads DAPG. Residues 82–86 and 137–140 each bind GTP; these read DAPGH and NKTD. Residues 137–140 form a G4 region; sequence NKTD. Residues 175–177 form a G5 region; the sequence is SAL.

It belongs to the TRAFAC class translation factor GTPase superfamily. Classic translation factor GTPase family. EF-Tu/EF-1A subfamily. In terms of assembly, monomer.

The protein localises to the cytoplasm. It catalyses the reaction GTP + H2O = GDP + phosphate + H(+). In terms of biological role, GTP hydrolase that promotes the GTP-dependent binding of aminoacyl-tRNA to the A-site of ribosomes during protein biosynthesis. The chain is Elongation factor Tu from Limosilactobacillus reuteri (strain DSM 20016) (Lactobacillus reuteri).